The sequence spans 367 residues: tRNA pseudouridine synthase D (367 aa).

Asp-78 serves as the catalytic Nucleophile. In terms of domain architecture, TRUD spans 153-300; that stretch reads GVPNYFGEQR…KQERRRIRLT (148 aa).

It belongs to the pseudouridine synthase TruD family.

The enzyme catalyses uridine(13) in tRNA = pseudouridine(13) in tRNA. Functionally, responsible for synthesis of pseudouridine from uracil-13 in transfer RNAs. The chain is tRNA pseudouridine synthase D from Colwellia psychrerythraea (strain 34H / ATCC BAA-681) (Vibrio psychroerythus).